The sequence spans 71 residues: uncharacterized protein (71 aa).

This is an uncharacterized protein from Escherichia coli (strain K12).